Here is a 163-residue protein sequence, read N- to C-terminus: NADH-quinone oxidoreductase subunit I 1 (163 aa).

2 consecutive 4Fe-4S ferredoxin-type domains span residues 53–83 (LRRY…IEAG) and 94–123 (VRYD…EGPN). Residues Cys-63, Cys-66, Cys-69, Cys-73, Cys-103, Cys-106, Cys-109, and Cys-113 each coordinate [4Fe-4S] cluster.

This sequence belongs to the complex I 23 kDa subunit family. As to quaternary structure, NDH-1 is composed of 14 different subunits. Subunits NuoA, H, J, K, L, M, N constitute the membrane sector of the complex. The cofactor is [4Fe-4S] cluster.

The protein resides in the cell inner membrane. It catalyses the reaction a quinone + NADH + 5 H(+)(in) = a quinol + NAD(+) + 4 H(+)(out). In terms of biological role, NDH-1 shuttles electrons from NADH, via FMN and iron-sulfur (Fe-S) centers, to quinones in the respiratory chain. The immediate electron acceptor for the enzyme in this species is believed to be ubiquinone. Couples the redox reaction to proton translocation (for every two electrons transferred, four hydrogen ions are translocated across the cytoplasmic membrane), and thus conserves the redox energy in a proton gradient. In Rhizobium etli (strain ATCC 51251 / DSM 11541 / JCM 21823 / NBRC 15573 / CFN 42), this protein is NADH-quinone oxidoreductase subunit I 1.